The following is a 1380-amino-acid chain: DNA-directed RNA polymerase subunit beta (1380 aa).

The protein belongs to the RNA polymerase beta chain family. In terms of assembly, the RNAP catalytic core consists of 2 alpha, 1 beta, 1 beta' and 1 omega subunit. When a sigma factor is associated with the core the holoenzyme is formed, which can initiate transcription.

The catalysed reaction is RNA(n) + a ribonucleoside 5'-triphosphate = RNA(n+1) + diphosphate. Functionally, DNA-dependent RNA polymerase catalyzes the transcription of DNA into RNA using the four ribonucleoside triphosphates as substrates. This Alcanivorax borkumensis (strain ATCC 700651 / DSM 11573 / NCIMB 13689 / SK2) protein is DNA-directed RNA polymerase subunit beta.